The primary structure comprises 78 residues: Small ribosomal subunit protein bS20 (78 aa).

The protein belongs to the bacterial ribosomal protein bS20 family.

Its function is as follows. Binds directly to 16S ribosomal RNA. This chain is Small ribosomal subunit protein bS20, found in Streptococcus pneumoniae serotype 4 (strain ATCC BAA-334 / TIGR4).